The sequence spans 939 residues: UvrABC system protein A (939 aa).

Residue 32–39 coordinates ATP; the sequence is GLSGSGKS. A C4-type zinc finger spans residues 252–279; it reads CADCGISIDELAPRMFSFNSPFGKCERC. ABC transporter domains follow at residues 309-588 and 608-936; these read WGDS…ENSL and GNGN…KYLK. ATP is bound at residue 640-647; sequence GVSGSGKS. A C4-type zinc finger spans residues 739 to 765; the sequence is CEACSGDGIIKIEMQFLSDVYVPCEVC.

Belongs to the ABC transporter superfamily. UvrA family. In terms of assembly, forms a heterotetramer with UvrB during the search for lesions.

The protein localises to the cytoplasm. In terms of biological role, the UvrABC repair system catalyzes the recognition and processing of DNA lesions. UvrA is an ATPase and a DNA-binding protein. A damage recognition complex composed of 2 UvrA and 2 UvrB subunits scans DNA for abnormalities. When the presence of a lesion has been verified by UvrB, the UvrA molecules dissociate. The sequence is that of UvrABC system protein A from Clostridium perfringens (strain 13 / Type A).